We begin with the raw amino-acid sequence, 1154 residues long: Voltage-dependent calcium channel subunit alpha-2/delta-2 (1154 aa).

Positions 1–18 (MAVPARTCGASWPGPVRT) are cleaved as a signal peptide. Residues 1–37 (MAVPARTCGASWPGPVRTARPWPGRGPRPCPDPRGPA) are disordered. The Extracellular segment spans residues 19-1116 (ARPWPGRGPR…TEDTSDCGRG (1098 aa)). Residues 24 to 34 (GRGPRPCPDPR) are compositionally biased toward pro residues. N205 carries an N-linked (GlcNAc...) asparagine glycan. Positions 294 to 472 (DMVIIVDVSG…INTQEYLDVL (179 aa)) constitute a VWFA domain. A divalent metal cation is bound by residues D300, S302, and S304. Positions 300-304 (DVSGS) match the MIDAS-like motif motif. N-linked (GlcNAc...) asparagine glycans are attached at residues N389, N421, N510, N543, N627, and N864. C446 and C1101 form a disulfide bridge. The Cache domain maps to 488–577 (WTNVYEDALG…KPQTTNFREP (90 aa)). Residues 1117–1137 (ASFPPSLGVLVSLQLLLLLGL) traverse the membrane as a helical segment. Residues 1138–1154 (PPRPQPQVHSFAASRHL) lie on the Cytoplasmic side of the membrane.

It belongs to the calcium channel subunit alpha-2/delta family. In terms of assembly, dimer formed of alpha-2-2 and delta-2 chains; disulfide-linked. Voltage-dependent calcium channels are multisubunit complexes, consisting of alpha-1 (CACNA1), alpha-2 (CACNA2D), beta (CACNB) and delta (CACNA2D) subunits in a 1:1:1:1 ratio. Post-translationally, N-glycosylated. In terms of processing, may be proteolytically processed into subunits alpha-2-2 and delta-2 that are disulfide-linked. It is however unclear whether such cleavage really takes place in vivo and has a functional role. According to PubMed:11306709, it is processed, at least in vitro, while according to PubMed:17052222, it is only poorly processed in vivo. In terms of tissue distribution, predominantly expressed in brain in a restricted pattern. Also expressed at lower level in kidney and testis Not expressed in lung at any moment of development. In brain, it localizes to sections of P21 brain. Expressed at high level in the cerebellum, with moderate levels in medulla, pons, and striatum. Also expressed in cortex, hippocampus, habenula and nucleus reticularis thalami (nRT). Strongly expressed in cerebellar Purkinje cells.

The protein localises to the membrane. In terms of biological role, the alpha-2/delta subunit of voltage-dependent calcium channels regulates calcium current density and activation/inactivation kinetics of the calcium channel. Acts as a regulatory subunit for P/Q-type calcium channel (CACNA1A), N-type (CACNA1B), L-type (CACNA1C OR CACNA1D) and possibly T-type (CACNA1G). This chain is Voltage-dependent calcium channel subunit alpha-2/delta-2 (Cacna2d2), found in Mus musculus (Mouse).